The primary structure comprises 117 residues: Large-conductance mechanosensitive channel (117 aa).

The next 3 helical transmembrane spans lie at Glu7 to Phe27, Ile30 to Val50, and Gly64 to Val84.

Belongs to the MscL family. As to quaternary structure, homopentamer.

The protein resides in the cell membrane. Its function is as follows. Channel that opens in response to stretch forces in the membrane lipid bilayer. May participate in the regulation of osmotic pressure changes within the cell. This Staphylococcus saprophyticus subsp. saprophyticus (strain ATCC 15305 / DSM 20229 / NCIMB 8711 / NCTC 7292 / S-41) protein is Large-conductance mechanosensitive channel.